Consider the following 583-residue polypeptide: Estrogen receptor (583 aa).

The modulating stretch occupies residues 1 to 138 (MYPEESRGSG…GFEITKNTRF (138 aa)). NR C4-type zinc fingers lie at residues 139-159 (CAVCSDYASGYHYGVWSCEGC) and 175-199 (CPATNQCTIDKNRRKSCQACRLRKC). The nuclear receptor DNA-binding region spans 139–204 (CAVCSDYASG…RLRKCYEVGM (66 aa)). The hinge stretch occupies residues 205–265 (MKGGMRKDRG…PGGRSSLNNM (61 aa)). The segment at 220 to 263 (EKHGPAQRQTSQNLPTHKASPQDGRKRAMSSSSTSGPGGRSSLN) is disordered. The 236-residue stretch at 266–501 (PPDQVLLLLQ…DLLLEMLDAH (236 aa)) folds into the NR LBD domain. The disordered stretch occupies residues 506–583 (PVKPSQSWSQ…GSHSDCTRIP (78 aa)). Residues 539 to 551 (ASSAGSSSGPQGS) show a composition bias toward low complexity.

It belongs to the nuclear hormone receptor family. NR3 subfamily. In terms of assembly, binds DNA as a homodimer. Can form a heterodimer with ER-beta.

It localises to the nucleus. Its function is as follows. The steroid hormones and their receptors are involved in the regulation of eukaryotic gene expression and affect cellular proliferation and differentiation in target tissues. The sequence is that of Estrogen receptor (esr1) from Oreochromis aureus (Israeli tilapia).